The sequence spans 165 residues: Destrin (165 aa).

Ala2 is modified (N-acetylalanine). Residue Ser3 is modified to Phosphoserine. The region spanning 4 to 153 (GVQVADEVCR…NRTSIAEKLG (150 aa)) is the ADF-H domain. Lys19 is modified (N6-acetyllysine). Residues 30–34 (KKRKK) carry the Nuclear localization signal motif.

Belongs to the actin-binding proteins ADF family. ISGylated.

Functionally, actin-depolymerizing protein. Severs actin filaments (F-actin) and binds to actin monomers (G-actin). Acts in a pH-independent manner. In Rattus norvegicus (Rat), this protein is Destrin (Dstn).